Consider the following 143-residue polypeptide: Large ribosomal subunit protein uL11 (143 aa).

The protein belongs to the universal ribosomal protein uL11 family. In terms of assembly, part of the ribosomal stalk of the 50S ribosomal subunit. Interacts with L10 and the large rRNA to form the base of the stalk. L10 forms an elongated spine to which L12 dimers bind in a sequential fashion forming a multimeric L10(L12)X complex. One or more lysine residues are methylated.

Functionally, forms part of the ribosomal stalk which helps the ribosome interact with GTP-bound translation factors. The protein is Large ribosomal subunit protein uL11 of Nitrosomonas europaea (strain ATCC 19718 / CIP 103999 / KCTC 2705 / NBRC 14298).